Reading from the N-terminus, the 280-residue chain is Alpha-methyl-mannoside-specific lectin (280 aa).

The signal sequence occupies residues 1-26 (MAISKKILPLLSIATIFLLLLNKAHS). A carbohydrate-binding residues include aspartate 114 and glycine 134. The Mn(2+) site is built by glutamate 156 and aspartate 158. Ca(2+) is bound by residues aspartate 158 and phenylalanine 160. A carbohydrate contacts are provided by serine 165 and asparagine 166. Ca(2+) is bound by residues asparagine 166 and aspartate 169. Residues aspartate 169 and histidine 174 each coordinate Mn(2+). A carbohydrate contacts are provided by glycine 248 and glutamine 250.

This sequence belongs to the leguminous lectin family. As to quaternary structure, homodimer. Post-translationally, glycosylated.

Alpha-methyl-D-mannoside-specific lectin. Has hemagglutinating activity towards rabbit erythrocytes. Binds to cytokinins and significantly inhibits physiological effects of cytokinin activity such as cotyledon expansion and delayed leaf senescence. The sequence is that of Alpha-methyl-mannoside-specific lectin from Arachis hypogaea (Peanut).